A 925-amino-acid chain; its full sequence is Coronin-7 (925 aa).

WD repeat units follow at residues 75 to 115, 124 to 163, 166 to 205, and 209 to 253; these read CHSD…QALP, PEDL…PLTE, AHGD…QASQ, and AHEN…SALA. Disordered stretches follow at residues 196–216 and 399–465; these read DPRT…SRDS and LVPP…SLQS. Over residues 201 to 210 the composition is skewed to polar residues; it reads PQASQSTQAH. A compositionally biased stretch (low complexity) spans 429–460; the sequence is SSPPSSLTSPSTPSSLGPTLSSTSGIGTGPSL. A phosphoserine mark is found at serine 462 and serine 465. Lysine 472 is covalently cross-linked (Glycyl lysine isopeptide (Lys-Gly) (interchain with G-Cter in ubiquitin)). 3 WD repeats span residues 542-582, 592-632, and 635-674; these read QNGA…LEEV, GHME…DRLK, and GHQD…EPLQ. Lysine 680 participates in a covalent cross-link: Glycyl lysine isopeptide (Lys-Gly) (interchain with G-Cter in ubiquitin). A WD 8 repeat occupies 728 to 768; it reads DVAPSTLVPSYEPRHWPGAPDWQGDARVFLYELLPESPFFM. Residues 857-925 form a disordered region; it reads LQPPDMSPVS…FEGVDEDEWD (69 aa). A compositionally biased stretch (low complexity) spans 866 to 882; it reads SQAPREAPARRAPSSAQ. Residues 884–896 are compositionally biased toward basic and acidic residues; it reads LEEKSDQQKKEEL. Phosphoserine is present on serine 915.

The protein belongs to the WD repeat coronin family. In terms of assembly, interacts with clathrin adapter AP1 complex. This interaction takes place at Golgi membranes and not AP1-positive endosomal membranes. Interacts (when ubiquitinated at Lys-472) with EPS15. The membrane-associated form is phosphorylated on tyrosine residues. Post-translationally, ubiquitinated via 'Lys-33'-linked ubiquitin chains by the BCR(KLHL20) E3 ubiquitin ligase complex: 'Lys-33'-linked ubiquitination promotes interaction with EPS15 and facilitates actin polymerization at the trans-Golgi network, thereby facilitating post-Golgi trafficking. Deubiquitinated by ZRANB1/TRABID.

The protein resides in the golgi apparatus membrane. It localises to the golgi apparatus. It is found in the trans-Golgi network. Its subcellular location is the cytoplasmic vesicle. The protein localises to the cytoplasm. The protein resides in the cytosol. Its function is as follows. F-actin regulator involved in anterograde Golgi to endosome transport: upon ubiquitination via 'Lys-33'-linked ubiquitin chains by the BCR(KLHL20) E3 ubiquitin ligase complex, interacts with EPS15 and localizes to the trans-Golgi network, where it promotes actin polymerization, thereby facilitating post-Golgi trafficking. May play a role in the maintenance of the Golgi apparatus morphology. The chain is Coronin-7 (CORO7) from Pongo abelii (Sumatran orangutan).